Reading from the N-terminus, the 226-residue chain is E3 ubiquitin-protein ligase RNF186 (226 aa).

The RING-type zinc finger occupies 39–85 (CLVCREPYNCARSPKLLSCQHTFCAVCLKLLLYVQEDTWSIPCPLCR). 2 helical membrane-spanning segments follow: residues 157-177 (HLLLLALVIVLILPFIYPGVI) and 179-199 (WVLAFVIALALLMSTLFCCHP).

Interacts with BNIP1. In terms of processing, polyubiquitinated. 'Lys-29'-linked autoubiquitination leads to proteasomal degradation.

The protein resides in the endoplasmic reticulum membrane. The enzyme catalyses S-ubiquitinyl-[E2 ubiquitin-conjugating enzyme]-L-cysteine + [acceptor protein]-L-lysine = [E2 ubiquitin-conjugating enzyme]-L-cysteine + N(6)-ubiquitinyl-[acceptor protein]-L-lysine.. The protein operates within protein modification; protein ubiquitination. E3 ubiquitin protein ligase that is part of an apoptotic signaling pathway activated by endoplasmic reticulum stress. Stimulates the expression of proteins specific of the unfolded protein response (UPR), ubiquitinates BNIP1 and regulates its localization to the mitochondrion and induces calcium release from the endoplasmic reticulum that ultimately leads to cell apoptosis. Plays a role in the maintenance of intestinal homeostasis and clearance of enteric pathogens. Upon NOD2 stimulation, ubiquitinates the ER stress sensor activating transcription factor 6/ATF6 and promotes the unfolded protein response UPR. Participates in basal level of autophagy maintenance by regulating the ubiquitination of EPHB2. Upon stimulation by ligand EFNB1, ubiquitinates EPHB2 and further recruits MAP1LC3B for autophagy induction. Controls nutrient sensing by ubiquitinating Sestrin-2/SESN2, which is an intracellular sensor of cytosolic leucine and inhibitor of mTORC1 activity. In Mus musculus (Mouse), this protein is E3 ubiquitin-protein ligase RNF186.